The following is a 465-amino-acid chain: Protein Loquacious (465 aa).

Positions 1 to 337 (MDQENFHGSS…DSICGELEGE (337 aa)) are necessary for enhancing pre-miRNA processing by Dcr-1. The not required for interaction with Dcr-1 stretch occupies residues 1 to 379 (MDQENFHGSS…TLKNATGKKL (379 aa)). An important for homodimerization and interaction with Dcr-1 region spans residues 1-392 (MDQENFHGSS…QKTCLKNNKI (392 aa)). The segment at 129 to 211 (NGLAMKTPVS…DKLIGAQLPE (83 aa)) is sufficient for binding RNA. The necessary for promoting preferential binding of Dcr-2 to the less stably base paired ends of siRNAs stretch occupies residues 129–322 (NGLAMKTPVS…WMRLQETPID (194 aa)). The 72-residue stretch at 135–206 (TPVSILQELL…ARALIDKLIG (72 aa)) folds into the DRBM 1 domain. The interval 209–249 (LPESPSSSAGPSVTGLTVAGSGGDGNANATGGGDASDKTVG) is enables simultaneous binding of both DRBM 1 and 2 domains to dsRNA. The tract at residues 210–246 (PESPSSSAGPSVTGLTVAGSGGDGNANATGGGDASDK) is disordered. Residues 211–223 (ESPSSSAGPSVTG) show a composition bias toward polar residues. The tract at residues 220 to 465 (SVTGLTVAGS…LEYLKIMTKK (246 aa)) is necessary and sufficient for enhancing processing of pre-miRNAs by Dcr-1. Residues 228 to 242 (GSGGDGNANATGGGD) are compositionally biased toward gly residues. Residues 245–322 (DKTVGNPIGW…WMRLQETPID (78 aa)) form a sufficient for binding RNA region. A DRBM 2 domain is found at 250–318 (NPIGWLQEMC…AHRMWMRLQE (69 aa)). Positions 308 to 309 (AA) are necessary for binding pre-miRNA. Positions 338-359 (PRSSENYYGELKDISVPTLTTQ) are required for binding to Dcr-2 and to fully enhance Dcr-2 mediated cleavage of 3' overhanging termini (3'ovr) and blunt termini (BLT) dsRNAs. However, this region is dispensable for binding the dsRNA substrates. The interval 340–465 (SSENYYGELK…LEYLKIMTKK (126 aa)) is necessary for interaction with Dcr-1. Residues 392–463 (IDYIKLLGEI…NALEYLKIMT (72 aa)) are sufficent for binding to Dcr-1. Residues 393 to 461 (DYIKLLGEIA…AQNALEYLKI (69 aa)) form the DRBM 3 domain.

Homodimer. In terms of assembly, interacts with dicer enzyme Dcr-1. As to quaternary structure, component of the miRNA-directed RNA-induced loading complex (miRLC), composed of at least Dcr-1, AGO1 and loqs isoform PB (loqs-PB), which processes pre-miRNAs and loads the resulting miRNAs into the Argonaute 1 (AGO1)-containing RNA-induced silencing complex (miRISC) to target the selective destruction of homologous RNAs. Interacts (via DRBM 3 domain) with dicer enzyme Dcr-1 (via helicase domain). Different regions of the Dcr-1-loqs-PB heterodimer collaborate to recognize, bind and position the pre-miRNA for Dcr-1 mediated cleavage. In the absence of miRNA substrates, the heterodimer favors a closed, catalytically incompetent, conformation, whereas binding of authentic pre-miRNA substrates stabilizes the relatively rare open, catalytically competent, conformation of the heterodimer. During substrate recognition, the Dcr-1 PAZ domain and pre-miRNA interact with the DRBM 1 domain of loqs-PB, which likely contributes to substrate recognition and stabilization. At the miRNA binding stage, the Dcr-1 DRBM domain and the loqs-PB DRBM domains then bind the pre-miRNA in tandem to form a tight 'belt' around the pre-miRNA stem, the pre-miRNA loop is docked in the loop-binding region formed by DUF283, DRBM and part of the helicase domain of Dcr-1, and the loqs-PB DRBM 1 and the wing domain of Dcr-1 act together to bind the 5' and 3' pre-miRNA termini within the PAZ and platform domains of Dcr-1. These interactions between the proteins and their pre-miRNA substrate stabilize a distorted form of the pre-miRNA and position the scissile phosphodiester bonds of the pre-miRNA at the RNase III catalytic cleavage sites of Dcr-1. Following Dcr-1 mediated cleavage, the miRNA duplex remains bound to loqs-PB DRBM 1, which dissociates from the Dcr-1 RNase III 1 domain but remains in contact with the PAZ and wing domains suggesting that the heterodimer presents the mature miRNA to AGO2 for loading into the RNA-induced silencing complex (miRISC). Able to interact with dicer enzyme Dcr-1. However, the relevance of such an interaction is unclear in vivo and another report found that it did not interact with Dcr-1. In terms of assembly, monomer. Interacts (via C-terminus) with dicer enzyme Dcr-2 (via N-terminus); interaction is required for RNAi activity in producing siRNAs from a subset of endo- and exo-dsRNAs, and in the alternative siRLC, the interaction enhances the binding preference of the protein for the thermodynamically more stable ends of endogenous siRNAs. Interaction with Dcr-2 is RNA independent, however the isoform must bind both dsRNA and Dcr-2 to enhance Dcr-2 cleavage activity. Does not interact with Dcr-1. As to expression, strong expression in males and females. Expression in ovaries is relatively weak. In terms of tissue distribution, strong expression in females and relatively weak expression in males. Strong expression in ovaries.

It localises to the cytoplasm. It is found in the cytosol. Its function is as follows. Double-stranded RNA-binding protein which can function in gene silencing by acting with Dcr-1 to enhance its ATP-independent processing of a specific subset of precursor micro-RNAs (pre-miRNAs) to mature miRNAs. Some reports found it was able to enhance the efficiency of pre-miRNA processing by Dcr-1, and can shift the cleavage site of Dcr-1 altering the length of the mature miRNAs produced by Dcr-1 alone. However, in contrast to isoform PB, it is not necessary or sufficient for enhancing miRNA biogenesis, and is not required for development or female germline stem cell (GSC) maintenance. Another report also found that it decreases binding of Dcr-1 to the miRNA substrate let-7. Functionally, double-stranded RNA-binding protein which functions in gene silencing by acting with Dcr-1 to enhance its ATP-independent processing of a specific subset of precursor micro-RNAs (pre-miRNAs) to mature miRNAs. Function is essential for development and female germline stem cell (GSC) maintenance. Functions in miRNA-mediated gene silencing by enhancing the binding affinity and specific pre-miRNA processing activity of Dcr-1, and as part of the loqs-PB-Dcr-1 complex, is involved in substrate discrimination, correctly positioning the pre-miRNA in the Dcr-1 catalytic center for cleavage, and miRNA loading into the Argonaute 1 (Ago1)-containing RNA-induced silencing complex (miRISC). Increases the binding affinity of Dcr-1 to pre-miRNAs, thereby increasing dicing efficiency and broadening the range of substrates that can be processed by the dicer. It may also confer the substrate specificity of Dcr-1 towards pre-miRNAs, as in its absence Dcr-1 displays siRNA-generating activity towards long dsRNA substrates. It can also shift the cleavage site of Dcr-1 for a small number of pre-miRNAs, changing the length of the mature miRNAs produced by Dcr-1 alone. Increases the range of pre-miRNAs that can be processed by Dcr-1, by enhancing the dicing of suboptimal hairpin substrates including ones with mismatches at the dicing site. This function may also promote the generation of novel miRNA genes as it appears to have an important role in processing evolutionarily young miRNA genes, suggesting that it may also enhance dicing of substrates that have not acquired hairpin features required for efficient miRNA processing. As newly emerged miRNAs can have deleterious or beneficial effects on fitness, this function is likely part of a regulatory system that prevents excessive emergence of active miRNA genes and thus keeps them within an optimal range. Also forms a RISC loading complex (miRLC) with Dcr-1 to mediate Ago1-loading of mature miRNAs into the RNA-induced silencing complex (miRISC). In female ovaries, required for Dcr-1 to generate the twenty-three nucleotide isomiR variant of miR-307a which is able to repress its targets Gk2 and tara. In terms of biological role, double-stranded RNA-binding protein which has an essential role in gene silencing (RNAi) by acting with Dcr-2 to enhance its ATP-dependent processing of a subset of endogenous (endo) and exogenous (exo) dsRNAs into short interfering RNAs (siRNAs). Functions in RNAi by increasing the initial binding affinity of Dcr-2 to certain dsRNA substrates, and in the absence of r2d2, may also function in siRNA loading into the Argonaute 2 (AGO2)-containing RNA-induced silencing complex (siRISC) and guide strand selection for target silencing by the siRISC. Promotes Dcr-2 cleavage of a subset of dsRNAs, including endo-dsRNAs derived from convergent transcription, inverted repeats and transposons. Also enables Dcr-2 to produce hairpin-derived endo-siRNAs in the presence of cellular inhibitory inorganic phosphate, likely by increasing the binding affinity of the enzyme to the hairpin dsRNAs allowing the dsRNA to displace phosphate bound to Dcr-2. According to many reports, the cleavage reaction mode of Dcr-2 changes according to the termini of the dsRNA substrate, with the enzyme displaying a preference for processing blunt termini (BLT), likely non-self dsRNAs, over dsRNAs with 2 nucleotides 3' overhanging (3'ovr) termini, which are typically the structure of endo-dsRNAs. According to many reports, interaction with Loqs-PD modifies the molecular recognition mechanisms of Dcr-2 towards sub-optimal 3'ovr dsRNA substrates and thus enables the dicer to cleave endo-dsRNA templates with diverse termini. However, according to another report, the mode of cleavage reaction is not affected by the presence or absence of loqs-PD. In the absence of r2d2, may also form an alternative RISC loading complex (siRLC) with Dcr-2 to mediate AGO2-loading of endo- and exo-siRNAs into the RNA-induced silencing complex (siRISC). Many reports suggest that loqs-PD and r2d2 function independently with dcr-2 in distinct siRNA pathways, and may even compete for binding to the enzyme. Loaded siRNAs serve as a guide to direct the siRISC to complementary RNAs to degrade them or prevent their translation. The siRLC plays an important role in the ATP-dependent asymmetry sensing of the duplex, and is therefore also responsible for the selection of the strand that ultimately acts as the guide siRNA for the siRISC. Thermodynamically asymmetric endo-siRNAs can be pre-oriented in the siRLC by the Loqs-PD and DCr-2 complex, which preferentially binds to the most thermodynamically stable strand prior to loading into the siRISC. Appears to be involved in promoting double-strand breaks (DSBs) following exposure to a low-dose/dose-rate (LDR) of ionizing radiation. The sequence is that of Protein Loquacious from Drosophila melanogaster (Fruit fly).